Reading from the N-terminus, the 60-residue chain is uncharacterized protein (60 aa).

A helical transmembrane segment spans residues 14-34; the sequence is MLFLGTIGLAVVVGGLMAYGY. The interval 38-60 is disordered; it reads GKTPSSGTSFHTASPSFSSRYRY. The span at 40-60 shows a compositional bias: polar residues; sequence TPSSGTSFHTASPSFSSRYRY.

The protein localises to the host membrane. This is an uncharacterized protein from Dryophytes versicolor (chameleon treefrog).